A 266-amino-acid polypeptide reads, in one-letter code: Gap junction beta-4 protein (266 aa).

Residues 2-13 (NWGFLQGILSGV) lie within the membrane without spanning it. The Cytoplasmic segment spans residues 14–20 (NKYSTAL). Residues 21-40 (GRIWLSVVFIFRVLVYVVAA) traverse the membrane as a helical segment. At 41-73 (EEVWDDDQKDFICNTKQPGCPNVCYDEFFPVSH) the chain is on the extracellular side. 3 cysteine pairs are disulfide-bonded: Cys-53–Cys-175, Cys-60–Cys-169, and Cys-64–Cys-164. Residues 74–94 (VRLWALQLILVTCPSLLVVMH) form a helical membrane-spanning segment. Over 95-130 (VAYREERERKHRLKHGPNAPALYSNLSKKRGGLWWT) the chain is Cytoplasmic. The chain crosses the membrane as a helical span at residues 131–151 (YLLSLIFKAAVDSGFLYIFHC). At 152-184 (IYKDYDMPRVVACSVTPCPHTVDCYIARPTEKK) the chain is on the extracellular side. The helical transmembrane segment at 185–205 (VFTYFMVVTAAICILLNLSEV) threads the bilayer. At 206 to 266 (VYLVGKRCME…MATVDAGVYP (61 aa)) the chain is on the cytoplasmic side.

The protein belongs to the connexin family. Beta-type (group I) subfamily. As to quaternary structure, a hemichannel or connexon is composed of a hexamer of connexins. A functional gap junction is formed by the apposition of two hemichannels. Forms heteromeric channels with GJB2. Detected in cochlea (at protein level). Detected in cochlea. Expressed in skin.

Its subcellular location is the cell membrane. It localises to the cell junction. The protein localises to the gap junction. Structural component of gap junctions. Gap junctions are dodecameric channels that connect the cytoplasm of adjoining cells. They are formed by the docking of two hexameric hemichannels, one from each cell membrane. Small molecules and ions diffuse from one cell to a neighboring cell via the central pore. The polypeptide is Gap junction beta-4 protein (Gjb4) (Mus musculus (Mouse)).